We begin with the raw amino-acid sequence, 777 residues long: Glucocorticoid receptor (777 aa).

A compositionally biased stretch (basic and acidic residues) spans 1-14 (MDSKESLTPGKEEN). Positions 1 to 21 (MDSKESLTPGKEENPSSVLTQ) are disordered. A modulating region spans residues 1 to 420 (MDSKESLTPG…TATTGPPPKL (420 aa)). Phosphothreonine is present on Thr-8. Residue Arg-23 is modified to Omega-N-methylarginine. Residues Ser-45, Ser-113, Ser-134, and Ser-141 each carry the phosphoserine modification. Residues 130 to 182 (NRSTSVPENPKSSASSSVSAAPKEKEFPKTHSDVSSEQQNLKGQTGTNGGNVK) form a disordered region. Residues 134–150 (SVPENPKSSASSSVSAA) are compositionally biased toward low complexity. The segment covering 151-163 (PKEKEFPKTHSDV) has biased composition (basic and acidic residues). The segment covering 164–174 (SSEQQNLKGQT) has biased composition (polar residues). Phosphoserine occurs at positions 203, 211, and 226. A Glycyl lysine isopeptide (Lys-Gly) (interchain with G-Cter in SUMO2) cross-link involves residue Lys-258. Position 267 is a phosphoserine (Ser-267). Glycyl lysine isopeptide (Lys-Gly) (interchain with G-Cter in SUMO); alternate cross-links involve residues Lys-277 and Lys-293. Residues Lys-277 and Lys-293 each participate in a glycyl lysine isopeptide (Lys-Gly) (interchain with G-Cter in SUMO2); alternate cross-link. Low complexity predominate over residues 394 to 414 (SSPSMRPDVSSPPSSSSTATT). Residues 394–415 (SSPSMRPDVSSPPSSSSTATTG) are disordered. At Ser-404 the chain carries Phosphoserine. A Glycyl lysine isopeptide (Lys-Gly) (interchain with G-Cter in ubiquitin) cross-link involves residue Lys-419. 2 consecutive NR C4-type zinc fingers follow at residues 421–441 (CLVC…CGSC) and 457–481 (CAGR…YRKC). A DNA-binding region (nuclear receptor) is located at residues 421–486 (CLVCSDEASG…RYRKCLQAGM (66 aa)). N6-acetyllysine occurs at positions 480, 492, 494, and 495. The interaction with CLOCK stretch occupies residues 485-777 (GMNLEARKTK…NIKKLLFHQK (293 aa)). Residues 487-523 (NLEARKTKKKIKGIQQATTGVSQETSENPANKTIVPA) are hinge. Residues 524–758 (TLPQLTPTLV…FPEMLAEIIT (235 aa)) form the NR LBD domain. The tract at residues 532–697 (LVSLLEVIEP…EIRMTYIKEL (166 aa)) is interaction with CRY1. A Glycyl lysine isopeptide (Lys-Gly) (interchain with G-Cter in SUMO) cross-link involves residue Lys-703.

The protein belongs to the nuclear hormone receptor family. NR3 subfamily. Heteromultimeric cytoplasmic complex with HSP90AA1, HSPA1A/HSPA1B, and FKBP5 or another immunophilin such as PPID, STIP1, or the immunophilin homolog PPP5C. Upon ligand binding FKBP5 dissociates from the complex and FKBP4 takes its place, thereby linking the complex to dynein and mediating transport to the nucleus, where the complex dissociates. Probably forms a complex composed of chaperones HSP90 and HSP70, co-chaperones CDC37, PPP5C, TSC1 and client protein TSC2, CDK4, AKT, RAF1 and NR3C1; this complex does not contain co-chaperones STIP1/HOP and PTGES3/p23. Directly interacts with UNC45A. Binds to DNA as a homodimer, and as heterodimer with NR3C2 or the retinoid X receptor. Binds STAT5A and STAT5B homodimers and heterodimers. Interacts with NRIP1, POU2F1, POU2F2 and TRIM28. Interacts with several coactivator complexes, including the SMARCA4 complex, CREBBP/EP300, TADA2L (Ada complex) and p160 coactivators such as NCOA2 and NCOA6. Interaction with BAG1 inhibits transactivation. Interacts with HEXIM1 and TGFB1I1. Interacts with NCOA1. Interacts with NCOA3, SMARCA4, SMARCC1, SMARCD1, and SMARCE1. Interacts with CLOCK, CRY1 and CRY2 in a ligand-dependent fashion. Interacts with CIART. Interacts with RWDD3. Interacts with UBE2I/UBC9 and this interaction is enhanced in the presence of RWDD3. Interacts with GRIP1. Interacts with NR4A3 (via nuclear receptor DNA-binding domain), represses transcription activity of NR4A3 on the POMC promoter Nur response element (NurRE). Directly interacts with PNRC2 to attract and form a complex with UPF1 and DCP1A; the interaction leads to rapid mRNA degradation. Interacts with GSK3B. Interacts with FNIP1 and FNIP2. Interacts (via C-terminus) with HNRNPU (via C-terminus). Interacts with MCM3AP. Interacts (via domain NR LBD) with HSP90AA1 and HSP90AB1. In the absence of hormonal ligand, interacts with TACC1. Interacts (via NR LBD domain) with ZNF764 (via KRAB domain); the interaction regulates transcription factor activity of NR3C1 by directing its actions toward certain biologic pathways. Post-translationally, acetylation by CLOCK reduces its binding to glucocorticoid response elements and its transcriptional activity. Increased proteasome-mediated degradation in response to glucocorticoids. In terms of processing, phosphorylated in the absence of hormone; becomes hyperphosphorylated in the presence of glucocorticoid. The Ser-203, Ser-226 and Ser-404-phosphorylated forms are mainly cytoplasmic, and the Ser-211-phosphorylated form is nuclear. Phosphorylation at Ser-211 increases transcriptional activity. Phosphorylation at Ser-203, Ser-226 and Ser-404 decreases signaling capacity. Phosphorylation at Ser-404 may protect from glucocorticoid-induced apoptosis. Phosphorylation at Ser-203 and Ser-211 is not required in regulation of chromosome segregation. May be dephosphorylated by PPP5C, attenuates NR3C1 action. Post-translationally, ubiquitinated by UBR5, leading to its degradation: UBR5 specifically recognizes and binds ligand-bound NR3C1 when it is not associated with coactivators (NCOAs). In presence of NCOAs, the UBR5-degron is not accessible, preventing its ubiquitination and degradation. Sumoylation at Lys-277 and Lys-293 negatively regulates its transcriptional activity. Sumoylation at Lys-703 positively regulates its transcriptional activity in the presence of RWDD3. Sumoylation at Lys-277 and Lys-293 is dispensable whereas sumoylation at Lys-703 is critical for the stimulatory effect of RWDD3 on its transcriptional activity. Heat shock increases sumoylation in a RWDD3-dependent manner. Within the infant and adult hippocampal formation, highest expression observed in the DG granule cell layer with moderate levels in the DG hilus, the CA2-CA4 pyramidal cell layer and the proximal part of the CA1 pyramidal cell layer. Moderate to high expression levels found in the presubiculum and in its' superficial layers. Weak but specific expression detected throughout the entire corticle mantle. In the amygdala, moderate levels were detected in the lateral, central and medial nuclei. Moderate expression levels were present in the PVNh alongside the third ventricle.

It is found in the cytoplasm. The protein localises to the nucleus. The protein resides in the mitochondrion. It localises to the cytoskeleton. Its subcellular location is the spindle. It is found in the microtubule organizing center. The protein localises to the centrosome. The protein resides in the chromosome. It localises to the nucleoplasm. Receptor for glucocorticoids (GC). Has a dual mode of action: as a transcription factor that binds to glucocorticoid response elements (GRE), both for nuclear and mitochondrial DNA, and as a modulator of other transcription factors. Affects inflammatory responses, cellular proliferation and differentiation in target tissues. Involved in chromatin remodeling. Plays a role in rapid mRNA degradation by binding to the 5' UTR of target mRNAs and interacting with PNRC2 in a ligand-dependent manner which recruits the RNA helicase UPF1 and the mRNA-decapping enzyme DCP1A, leading to RNA decay. Could act as a coactivator for STAT5-dependent transcription upon growth hormone (GH) stimulation and could reveal an essential role of hepatic GR in the control of body growth. Mediates glucocorticoid-induced apoptosis. Promotes accurate chromosome segregation during mitosis. May act as a tumor suppressor. May play a negative role in adipogenesis through the regulation of lipolytic and antilipogenic gene expression. The protein is Glucocorticoid receptor (NR3C1) of Callithrix jacchus (White-tufted-ear marmoset).